We begin with the raw amino-acid sequence, 227 residues long: Phosphoglycolate phosphatase (227 aa).

The active-site Nucleophile is the D9. Mg(2+) is bound by residues D9, D11, and D171.

Belongs to the HAD-like hydrolase superfamily. CbbY/CbbZ/Gph/YieH family. It depends on Mg(2+) as a cofactor.

It catalyses the reaction 2-phosphoglycolate + H2O = glycolate + phosphate. It participates in organic acid metabolism; glycolate biosynthesis; glycolate from 2-phosphoglycolate: step 1/1. Specifically catalyzes the dephosphorylation of 2-phosphoglycolate. Is involved in the dissimilation of the intracellular 2-phosphoglycolate formed during the DNA repair of 3'-phosphoglycolate ends, a major class of DNA lesions induced by oxidative stress. In Mesorhizobium japonicum (strain LMG 29417 / CECT 9101 / MAFF 303099) (Mesorhizobium loti (strain MAFF 303099)), this protein is Phosphoglycolate phosphatase.